We begin with the raw amino-acid sequence, 213 residues long: Ribulose-phosphate 3-epimerase (213 aa).

Serine 9 contacts substrate. Positions 34, 36, and 66 each coordinate a divalent metal cation. Aspartate 36 acts as the Proton acceptor in catalysis. Substrate is bound by residues histidine 66, 139 to 142, 166 to 168, and 186 to 187; these read GFGG, DGG, and GS. An a divalent metal cation-binding site is contributed by aspartate 166. Catalysis depends on aspartate 166, which acts as the Proton donor.

This sequence belongs to the ribulose-phosphate 3-epimerase family. Co(2+) is required as a cofactor. It depends on Fe(2+) as a cofactor. Requires Mn(2+) as cofactor. The cofactor is Zn(2+).

It catalyses the reaction D-ribulose 5-phosphate = D-xylulose 5-phosphate. It participates in carbohydrate degradation; pentose phosphate pathway; D-xylulose 5-phosphate from D-ribulose 5-phosphate (non-oxidative stage): step 1/1. Its function is as follows. Catalyzes the reversible epimerization of D-ribulose 5-phosphate to D-xylulose 5-phosphate. The protein is Ribulose-phosphate 3-epimerase (RPE1) of Encephalitozoon cuniculi (strain GB-M1) (Microsporidian parasite).